The following is a 108-amino-acid chain: Nucleoid-associated protein IL1848 (108 aa).

2 disordered regions span residues 1–26 and 88–108; these read MFKG…AQEE and KERM…KMPF. A compositionally biased stretch (low complexity) spans 9–26; the sequence is MMKQAQQMQERMQQAQEE.

It belongs to the YbaB/EbfC family. In terms of assembly, homodimer.

It localises to the cytoplasm. It is found in the nucleoid. Its function is as follows. Binds to DNA and alters its conformation. May be involved in regulation of gene expression, nucleoid organization and DNA protection. In Idiomarina loihiensis (strain ATCC BAA-735 / DSM 15497 / L2-TR), this protein is Nucleoid-associated protein IL1848.